Consider the following 804-residue polypeptide: Probable basic-leucine zipper transcription factor C (804 aa).

Disordered stretches follow at residues 86 to 148 (FISP…NDIN) and 275 to 371 (YGNV…PKKR). Residues 90–145 (NNNNNNNNNNNNNNNNNNNNNNNNNNNNNNNNNNNNNNNNNNNNNNNNNNNNNNNN) show a composition bias toward low complexity. Positions 275–291 (YGNVSDNSSPETNFSYA) are enriched in polar residues. Residues 292-334 (SPSSPSSTQSQSSPYEQQPLSPNPTISLSSSISVTATTTTRPN) show a composition bias toward low complexity. Positions 335-356 (ATEKTKESSLKSKSKSNEKDKE) are enriched in basic and acidic residues. In terms of domain architecture, bZIP spans 415 to 478 (ALNYQFRKIK…DQYKLQEKQK (64 aa)). The tract at residues 421–436 (RKIKNRESARRSRERK) is basic motif. The tract at residues 443–450 (LEAKIAEI) is leucine-zipper. Residues 670-693 (KNCNNNNENNNNNDNNKNSDDEKG) are disordered. Residues 672–685 (CNNNNENNNNNDNN) are compositionally biased toward low complexity.

Belongs to the bZIP family.

The protein localises to the nucleus. In terms of biological role, probable transcriptional regulator. This chain is Probable basic-leucine zipper transcription factor C (bzpC), found in Dictyostelium discoideum (Social amoeba).